The following is a 615-amino-acid chain: DNA mismatch repair protein MutL (615 aa).

The disordered stretch occupies residues 362-397 (HFAEPAVREPVAPRYTPAPASGSRPAAPWPNAQPGY). Residues 378-391 (PAPASGSRPAAPWP) show a composition bias toward low complexity.

It belongs to the DNA mismatch repair MutL/HexB family.

In terms of biological role, this protein is involved in the repair of mismatches in DNA. It is required for dam-dependent methyl-directed DNA mismatch repair. May act as a 'molecular matchmaker', a protein that promotes the formation of a stable complex between two or more DNA-binding proteins in an ATP-dependent manner without itself being part of a final effector complex. The protein is DNA mismatch repair protein MutL of Escherichia coli O17:K52:H18 (strain UMN026 / ExPEC).